Consider the following 112-residue polypeptide: Transmembrane protein 14C (112 aa).

4 consecutive transmembrane segments (helical) span residues 7–27 (VVPLHWFGFGYAALVASGGII), 32–52 (AGSVPSLAAGLLFGSLASLGA), 62–82 (VWVFLATSGTLAGIMGMRFYH), and 86–106 (FMPAGLIAGASLLMVAKVGVS).

The protein belongs to the TMEM14 family.

It is found in the mitochondrion membrane. Required for normal heme biosynthesis. The sequence is that of Transmembrane protein 14C (TMEM14C) from Pongo abelii (Sumatran orangutan).